We begin with the raw amino-acid sequence, 599 residues long: Retrotransposon Gag-like protein 5 (599 aa).

Disordered stretches follow at residues 77-97 (DPTPEEEEEEEEEVPFLCWPP), 116-139 (DYTNPDGSSDPPLSPSPSQPELHS), and 377-450 (FPQE…EEDE). The segment covering 78–90 (PTPEEEEEEEEEV) has biased composition (acidic residues). Acidic residues-rich tracts occupy residues 393–432 (DEMEDEEDEDEDEDYEFEEEDEDDDDEEEEEEEEEEEDKE) and 439–450 (DSDENKYEEEDE).

This chain is Retrotransposon Gag-like protein 5, found in Mus musculus (Mouse).